The primary structure comprises 197 residues: NADH-quinone oxidoreductase subunit C (197 aa).

The protein belongs to the complex I 30 kDa subunit family. NDH-1 is composed of 14 different subunits. Subunits NuoB, C, D, E, F, and G constitute the peripheral sector of the complex.

It localises to the cell inner membrane. The catalysed reaction is a quinone + NADH + 5 H(+)(in) = a quinol + NAD(+) + 4 H(+)(out). Functionally, NDH-1 shuttles electrons from NADH, via FMN and iron-sulfur (Fe-S) centers, to quinones in the respiratory chain. The immediate electron acceptor for the enzyme in this species is believed to be ubiquinone. Couples the redox reaction to proton translocation (for every two electrons transferred, four hydrogen ions are translocated across the cytoplasmic membrane), and thus conserves the redox energy in a proton gradient. This chain is NADH-quinone oxidoreductase subunit C, found in Methylobacillus flagellatus (strain ATCC 51484 / DSM 6875 / VKM B-1610 / KT).